A 242-amino-acid polypeptide reads, in one-letter code: Small ribosomal subunit protein uS2 (242 aa).

It belongs to the universal ribosomal protein uS2 family.

The sequence is that of Small ribosomal subunit protein uS2 from Aeromonas hydrophila subsp. hydrophila (strain ATCC 7966 / DSM 30187 / BCRC 13018 / CCUG 14551 / JCM 1027 / KCTC 2358 / NCIMB 9240 / NCTC 8049).